The following is a 765-amino-acid chain: Putative ankyrin repeat protein L371 (765 aa).

ANK repeat units follow at residues 60-89 (NGNYMIFFAIIMNSSTILKKLIKYGARLDV), 93-122 (EGNSVMYYPIKFGYYEIIDVLIDYDSKIIG), 132-161 (KGSVPLFYAIKYRNKYALQQLLSKDANANY), 165-194 (DNVNALHMAVLKKDISMVKLVIKHIKNLNA), 198-227 (QGSTALHYACNFQLYDITKLLLDNGADQNI), 232-261 (LDFYPIFYSVIQNDINISKLLVDYGANPNH), 265-295 (EGNTILHYCVIYNHMEIFDYIMNNYVIRCRS), 322-353 (DGLTVVHLMLYDYKEEYDNFLKKLIPYCNLNY), and 357-395 (TGNTILHLIAENNIWNKFDNLLNVKKLNIFIRNNNGKTV).

In Acanthamoeba polyphaga mimivirus (APMV), this protein is Putative ankyrin repeat protein L371.